We begin with the raw amino-acid sequence, 440 residues long: Proline--tRNA ligase (440 aa).

It belongs to the class-II aminoacyl-tRNA synthetase family. ProS type 2 subfamily. In terms of assembly, homodimer.

It localises to the cytoplasm. It carries out the reaction tRNA(Pro) + L-proline + ATP = L-prolyl-tRNA(Pro) + AMP + diphosphate. Its function is as follows. Catalyzes the attachment of proline to tRNA(Pro) in a two-step reaction: proline is first activated by ATP to form Pro-AMP and then transferred to the acceptor end of tRNA(Pro). The polypeptide is Proline--tRNA ligase (Azorhizobium caulinodans (strain ATCC 43989 / DSM 5975 / JCM 20966 / LMG 6465 / NBRC 14845 / NCIMB 13405 / ORS 571)).